The sequence spans 123 residues: Protein Wnt-3b (123 aa).

Ser-1 carries the O-palmitoleoyl serine; by PORCN lipid modification. A disulfide bridge links Cys-89 with Cys-104. Asn-90 carries N-linked (GlcNAc...) asparagine glycosylation.

Belongs to the Wnt family. Post-translationally, palmitoleoylation is required for efficient binding to frizzled receptors. Depalmitoleoylation leads to Wnt signaling pathway inhibition.

It is found in the secreted. It localises to the extracellular space. The protein resides in the extracellular matrix. Ligand for members of the frizzled family of seven transmembrane receptors. Probable developmental protein. May be a signaling molecule which affects the development of discrete regions of tissues. Is likely to signal over only few cell diameters. This is Protein Wnt-3b (WNT-3B) from Alopias vulpinus (Common thresher shark).